The following is a 218-amino-acid chain: Probable transaldolase (218 aa).

Lys84 serves as the catalytic Schiff-base intermediate with substrate.

It belongs to the transaldolase family. Type 3B subfamily.

The protein localises to the cytoplasm. The enzyme catalyses D-sedoheptulose 7-phosphate + D-glyceraldehyde 3-phosphate = D-erythrose 4-phosphate + beta-D-fructose 6-phosphate. Its pathway is carbohydrate degradation; pentose phosphate pathway; D-glyceraldehyde 3-phosphate and beta-D-fructose 6-phosphate from D-ribose 5-phosphate and D-xylulose 5-phosphate (non-oxidative stage): step 2/3. Its function is as follows. Transaldolase is important for the balance of metabolites in the pentose-phosphate pathway. The protein is Probable transaldolase of Sulfurihydrogenibium sp. (strain YO3AOP1).